The sequence spans 521 residues: Circadian clock oscillator protein KaiC (521 aa).

KaiC domains follow at residues 1-248 and 262-521; these read MNEP…INIF and ARIS…LDEE. Residues Gly50, Thr51, Gly52, Lys53, Thr54, Leu55, Ser90, Lys225, Leu226, Arg227, Thr229, His231, Thr241, Thr291, Gly292, Thr293, Gly294, Lys295, Thr296, and Leu297 each contribute to the ATP site. Thr54 is a Mg(2+) binding site. A Mg(2+)-binding site is contributed by Thr296. Glu319 contacts Mg(2+). Trp332 is a binding site for ATP. Ser432 carries the post-translational modification Phosphoserine; by autocatalysis. Position 433 is a phosphothreonine; by autocatalysis (Thr433). ATP-binding residues include Arg452, Lys458, Met459, Arg460, Ser462, His464, and Lys466.

It belongs to the KaiC family. In terms of assembly, homohexamer; hexamerization is dependent on ATP-binding. The KaiABC complex composition changes during the circadian cycle to control KaiC phosphorylation. Complexes KaiC(6), KaiA(2-4):KaiC(6), KaiB(6):KaiC(6) and KaiC(6):KaiB(6):KaiA(12) are among the most important forms, many form cooperatively. KaiC interacts with SasA, activating its autokinase function and leading to RpaA activation. Mg(2+) serves as cofactor. Post-translationally, phosphorylated on serine and threonine residues by autocatalysis. Has a 4 step phosphorylation cycle; the autokinase acts first on Thr-433, then Ser-432. When Ser-432 is modified KaiC switches to an autophosphatase mode, acting first on phospho-Thr-433 then phospho-Ser-432.

It catalyses the reaction L-seryl-[protein] + ATP = O-phospho-L-seryl-[protein] + ADP + H(+). The enzyme catalyses L-threonyl-[protein] + ATP = O-phospho-L-threonyl-[protein] + ADP + H(+). It carries out the reaction ATP + H2O = ADP + phosphate + H(+). With respect to regulation, the interaction with KaiA enhances its phosphorylation status, while the interaction with KaiB decreases it. Its function is as follows. Central component of the KaiABC oscillator complex, which constitutes the main circadian regulator in cyanobacteria. Complex composition changes during the circadian cycle to control KaiC phosphorylation. KaiA stimulates KaiC autophosphorylation, while KaiB sequesters KaiA, leading to KaiC autodephosphorylation. Clock output pathways impact the RpaA transcriptional regulator. KaiC enhances the autophosphorylation activity of SasA, which then transfers its phosphate group to RpaA to activate it. KaiB and KaiC together enhance the phospho-RpaA dephosphatase activity of CikA. Has a weak, temperature-independent ATPase activity; ATPase activity defines the circadian period. The phosphorylation state of KaiC modulates its ATPase activity and effects KaiB binding. This is Circadian clock oscillator protein KaiC from Rippkaea orientalis (strain PCC 8801 / RF-1) (Cyanothece sp. (strain PCC 8801)).